The chain runs to 428 residues: MIVRNIGARLGRRALATPLSRASFPAQSRFLSQDNFTAPPPPPTNSKKQAAKTAFAEPTLEEQAEFYAESIEKHTPEFAASPAAEAWSAPSATATETVTTWDPSLVDEEALKLKQQIEAIPGNFKLFKQTKAQTQKLGAGVEVRYIPEQYLRNPPSDASLEDLMAAQAHMGHNTSLWNPANARYIYGVRQGIHIISLETTATHLRRAARVVEEVAYRGGLILFVGTRPGQRPIVVRAAELAKACHLFTKWRPGTITNREQLLGGVPLTVVDELDRPLSGFEDHLHDRRPLAPDLVVCLNPKENMTLLYECSLAKIPTIGIIDTNTNPSWVTYQIPANDDSLRATALISGVLGRAGERGQKRRLEAAQRGVVTWKTPADVQGYFELASARAADARRRQAQDNSVEEQKEKDTFLSEDALKAMFGGDARI.

A disordered region spans residues 30 to 50 (FLSQDNFTAPPPPPTNSKKQA).

Belongs to the universal ribosomal protein uS2 family. Component of the mitochondrial small ribosomal subunit (mt-SSU). Mature N.crassa 74S mitochondrial ribosomes consist of a small (37S) and a large (54S) subunit. The 37S small subunit contains a 16S ribosomal RNA (16S mt-rRNA) and 32 different proteins. The 54S large subunit contains a 23S rRNA (23S mt-rRNA) and 42 different proteins.

It localises to the mitochondrion. Its function is as follows. Component of the mitochondrial ribosome (mitoribosome), a dedicated translation machinery responsible for the synthesis of mitochondrial genome-encoded proteins, including at least some of the essential transmembrane subunits of the mitochondrial respiratory chain. The mitoribosomes are attached to the mitochondrial inner membrane and translation products are cotranslationally integrated into the membrane. The protein is Small ribosomal subunit protein uS2m (mrp4) of Neurospora crassa (strain ATCC 24698 / 74-OR23-1A / CBS 708.71 / DSM 1257 / FGSC 987).